The chain runs to 138 residues: Large ribosomal subunit protein uL16 (138 aa).

The span at 1-13 shows a compositional bias: basic residues; that stretch reads MLQPKRRKYRKEQ. Positions 1–20 are disordered; it reads MLQPKRRKYRKEQKGRNTGI.

The protein belongs to the universal ribosomal protein uL16 family. As to quaternary structure, part of the 50S ribosomal subunit.

Functionally, binds 23S rRNA and is also seen to make contacts with the A and possibly P site tRNAs. The protein is Large ribosomal subunit protein uL16 of Burkholderia mallei (strain NCTC 10247).